A 413-amino-acid polypeptide reads, in one-letter code: MSGVAEPDCYLTYDITSDTLTLYVPDFDLRRAIWMGPTLGLAEARERYNIDQAKYRSTLEQDILDWASRRAIGSVIYVIHDNQKPVVPFPYLKFNHEDLIPAMDTCREIKDGHEIGLIRRANEISTSAHTEILRNISGMRNEAEIQGKFLDSCVSLGAKNQSYEIIAASGENAAVLHYTRNDEPLKGRQLVCLDAGAEWNCYASDVTRTFPMQPRWPSAEAFSVYSVVQRMQEECIKRISEGVRYLDLHILAHKIAIEELLRLGIFRGGSIAEILKSGASLVFFPHGLGHHVGLEVHDVSGRSLMALEEQEYQGLPLRGCRAPCTLSAPHLRAGMVVTVEPGIYFSRLALDDAKQKPLSKYIDMQLVAEYIPVGGVRIEDDVLVTRDGWENLTSAPKGRAMLDIIGEGARLRA.

Residues D194, D205, E340, and E379 each coordinate Mn(2+).

It belongs to the peptidase M24B family. Requires Mn(2+) as cofactor.

The enzyme catalyses Release of any N-terminal amino acid, including proline, that is linked to proline, even from a dipeptide or tripeptide.. Catalyzes the removal of a penultimate prolyl residue from the N-termini of peptides. The sequence is that of Probable Xaa-Pro aminopeptidase UREG_07123 from Uncinocarpus reesii (strain UAMH 1704).